A 547-amino-acid chain; its full sequence is MKKTFILGIEGTAWNLSAAIVTETEIIAEVTETYKPEKGGIHPREAAQHHAKYAAGVIKKLLAEAKQNGIEPSDLDGIAFSQGPGLGPCLRTVATAARMLGLSLGIPLIGVNHCIAHIEIGIWKTPAKDPVVLYVSGANSQVISYMEGRYRVFGETLDIGLGNALDKFARGAGLPHPGGPKIEAYAKEAKRYIPLPYVIKGMDLSFSGLSTAASEALRKASLEDVCYSYQETAFAMVVEVAERALAHTGKKEVLLAGGVGANTRLREMLNEMCEARGAKFYVPEKRFMGDNGTMIAYTGLLMYKSGNTISLEDSRVNPSFRTDDVKVTWIKEEEMKKVPEISPETFFRMPPGEILDNGAEAVVYLQEGPEGKRALVKERVPKAYRHKEIDERIRRERNRTEARLMSEARRAGVPTPIIYDVEEFKLKMQFIEGVPIKYLITPPLSEKVGELVGKLHSSGIVHGDLTTSNLLLAGERLYLIDFGLAYFDKSLEARGVDVHVLFQTFESTHRNYEALVKAFEKGYASTFIDSEDVLRRVEEIKKRARYA.

Positions 1 to 329 (MKKTFILGIE…FRTDDVKVTW (329 aa)) are kae1. The Fe cation site is built by His-113, His-117, and Tyr-134. L-threonylcarbamoyladenylate is bound by residues 134-138 (YVSGA), Asp-166, Gly-179, Glu-183, and Asn-262. Asp-290 provides a ligand contact to Fe cation. The region spanning 340-547 (EISPETFFRM…EEIKKRARYA (208 aa)) is the Protein kinase domain. Residues 355-363 (LDNGAEAVV) and Lys-377 contribute to the ATP site. Asp-464 acts as the Proton acceptor; for kinase activity in catalysis.

It in the N-terminal section; belongs to the KAE1 / TsaD family. The protein in the C-terminal section; belongs to the protein kinase superfamily. Tyr protein kinase family. BUD32 subfamily. As to quaternary structure, component of the KEOPS complex that consists of Kae1, Bud32, Cgi121 and Pcc1; the whole complex dimerizes. The cofactor is Fe(2+).

It localises to the cytoplasm. The catalysed reaction is L-seryl-[protein] + ATP = O-phospho-L-seryl-[protein] + ADP + H(+). It catalyses the reaction L-threonyl-[protein] + ATP = O-phospho-L-threonyl-[protein] + ADP + H(+). It carries out the reaction L-threonylcarbamoyladenylate + adenosine(37) in tRNA = N(6)-L-threonylcarbamoyladenosine(37) in tRNA + AMP + H(+). Functionally, required for the formation of a threonylcarbamoyl group on adenosine at position 37 (t(6)A37) in tRNAs that read codons beginning with adenine. Is a component of the KEOPS complex that is probably involved in the transfer of the threonylcarbamoyl moiety of threonylcarbamoyl-AMP (TC-AMP) to the N6 group of A37. The Kae1 domain likely plays a direct catalytic role in this reaction. The Bud32 domain probably displays kinase activity that regulates Kae1 function. The sequence is that of Probable bifunctional tRNA threonylcarbamoyladenosine biosynthesis protein from Methanosarcina mazei (strain ATCC BAA-159 / DSM 3647 / Goe1 / Go1 / JCM 11833 / OCM 88) (Methanosarcina frisia).